Here is a 361-residue protein sequence, read N- to C-terminus: Phospho-N-acetylmuramoyl-pentapeptide-transferase (361 aa).

The next 10 helical transmembrane spans lie at leucine 28–leucine 48, threonine 74–leucine 94, isoleucine 99–alanine 119, leucine 135–serine 155, serine 167–alanine 187, valine 203–isoleucine 223, threonine 236–phenylalanine 256, valine 263–isoleucine 283, isoleucine 288–valine 308, and lysine 338–leucine 358.

It belongs to the glycosyltransferase 4 family. MraY subfamily. Requires Mg(2+) as cofactor.

The protein localises to the cell inner membrane. It carries out the reaction UDP-N-acetyl-alpha-D-muramoyl-L-alanyl-gamma-D-glutamyl-meso-2,6-diaminopimeloyl-D-alanyl-D-alanine + di-trans,octa-cis-undecaprenyl phosphate = di-trans,octa-cis-undecaprenyl diphospho-N-acetyl-alpha-D-muramoyl-L-alanyl-D-glutamyl-meso-2,6-diaminopimeloyl-D-alanyl-D-alanine + UMP. It functions in the pathway cell wall biogenesis; peptidoglycan biosynthesis. Its function is as follows. Catalyzes the initial step of the lipid cycle reactions in the biosynthesis of the cell wall peptidoglycan: transfers peptidoglycan precursor phospho-MurNAc-pentapeptide from UDP-MurNAc-pentapeptide onto the lipid carrier undecaprenyl phosphate, yielding undecaprenyl-pyrophosphoryl-MurNAc-pentapeptide, known as lipid I. This chain is Phospho-N-acetylmuramoyl-pentapeptide-transferase, found in Rickettsia bellii (strain OSU 85-389).